The following is a 263-amino-acid chain: Acyl-[acyl-carrier-protein]--UDP-N-acetylglucosamine O-acyltransferase (263 aa).

It belongs to the transferase hexapeptide repeat family. LpxA subfamily. In terms of assembly, homotrimer.

It localises to the cytoplasm. The enzyme catalyses a (3R)-hydroxyacyl-[ACP] + UDP-N-acetyl-alpha-D-glucosamine = a UDP-3-O-[(3R)-3-hydroxyacyl]-N-acetyl-alpha-D-glucosamine + holo-[ACP]. The protein operates within glycolipid biosynthesis; lipid IV(A) biosynthesis; lipid IV(A) from (3R)-3-hydroxytetradecanoyl-[acyl-carrier-protein] and UDP-N-acetyl-alpha-D-glucosamine: step 1/6. Its function is as follows. Involved in the biosynthesis of lipid A, a phosphorylated glycolipid that anchors the lipopolysaccharide to the outer membrane of the cell. This Caulobacter vibrioides (strain ATCC 19089 / CIP 103742 / CB 15) (Caulobacter crescentus) protein is Acyl-[acyl-carrier-protein]--UDP-N-acetylglucosamine O-acyltransferase.